A 60-amino-acid chain; its full sequence is MTILKSISSMGISNRKNSFSFVSTNSMIETNQNVNSVSKSGYSKLIKGAALMAEGISGFF.

This is an uncharacterized protein from Dictyostelium discoideum (Social amoeba).